The primary structure comprises 751 residues: Catalase-peroxidase 2 (751 aa).

The signal sequence occupies residues Met1–Ala27. Residues Trp115–Tyr238 constitute a cross-link (tryptophyl-tyrosyl-methioninium (Trp-Tyr) (with M-264)). His116 serves as the catalytic Proton acceptor. A cross-link (tryptophyl-tyrosyl-methioninium (Tyr-Met) (with W-115)) is located at residues Tyr238–Met264. His279 lines the heme b pocket.

Belongs to the peroxidase family. Peroxidase/catalase subfamily. As to quaternary structure, homodimer or homotetramer. Requires heme b as cofactor. Formation of the three residue Trp-Tyr-Met cross-link is important for the catalase, but not the peroxidase activity of the enzyme.

The enzyme catalyses H2O2 + AH2 = A + 2 H2O. The catalysed reaction is 2 H2O2 = O2 + 2 H2O. In terms of biological role, bifunctional enzyme with both catalase and broad-spectrum peroxidase activity. In Idiomarina loihiensis (strain ATCC BAA-735 / DSM 15497 / L2-TR), this protein is Catalase-peroxidase 2.